A 132-amino-acid chain; its full sequence is Large ribosomal subunit protein uL24 (132 aa).

The protein belongs to the universal ribosomal protein uL24 family. In terms of assembly, part of the 50S ribosomal subunit.

Functionally, one of two assembly initiator proteins, it binds directly to the 5'-end of the 23S rRNA, where it nucleates assembly of the 50S subunit. In terms of biological role, one of the proteins that surrounds the polypeptide exit tunnel on the outside of the subunit. This Aquifex aeolicus (strain VF5) protein is Large ribosomal subunit protein uL24.